The sequence spans 195 residues: HTH-type transcriptional regulator BetI (195 aa).

The HTH tetR-type domain maps to 8–68 (SIRRRQLIDA…ATMRDITSQL (61 aa)). A DNA-binding region (H-T-H motif) is located at residues 31-50 (TIAQIARRAGVSTGIISHYF).

The protein operates within amine and polyamine biosynthesis; betaine biosynthesis via choline pathway [regulation]. In terms of biological role, repressor involved in the biosynthesis of the osmoprotectant glycine betaine. It represses transcription of the choline transporter BetT and the genes of BetAB involved in the synthesis of glycine betaine. This Escherichia coli O157:H7 protein is HTH-type transcriptional regulator BetI.